The following is a 302-amino-acid chain: Putative T-box protein 34 (302 aa).

A DNA-binding region (T-box) is located at residues 5 to 180; it reads IVNEHKYREL…KMNLAPGSSQ (176 aa).

It localises to the nucleus. The protein is Putative T-box protein 34 (tbx-34) of Caenorhabditis elegans.